The primary structure comprises 501 residues: Probable histidine--tRNA ligase, mitochondrial (501 aa).

Residues 32–54 (TNSNNNNNNNNNNNNNNNNNKNI) form a disordered region. Residues 33 to 54 (NSNNNNNNNNNNNNNNNNNKNI) are compositionally biased toward low complexity.

This sequence belongs to the class-II aminoacyl-tRNA synthetase family.

The protein localises to the mitochondrion matrix. The enzyme catalyses tRNA(His) + L-histidine + ATP = L-histidyl-tRNA(His) + AMP + diphosphate + H(+). This is Probable histidine--tRNA ligase, mitochondrial (mhisS) from Dictyostelium discoideum (Social amoeba).